The primary structure comprises 451 residues: UPF0210 protein LMOf2365_0563 (451 aa).

Belongs to the UPF0210 family. In terms of assembly, homodimer.

This chain is UPF0210 protein LMOf2365_0563, found in Listeria monocytogenes serotype 4b (strain F2365).